Consider the following 128-residue polypeptide: Small ribosomal subunit protein eS8 (128 aa).

Belongs to the eukaryotic ribosomal protein eS8 family. In terms of assembly, part of the 30S ribosomal subunit.

In Methanococcus vannielii (strain ATCC 35089 / DSM 1224 / JCM 13029 / OCM 148 / SB), this protein is Small ribosomal subunit protein eS8.